Here is a 160-residue protein sequence, read N- to C-terminus: Large ribosomal subunit protein uL22c (160 aa).

This sequence belongs to the universal ribosomal protein uL22 family. As to quaternary structure, part of the 50S ribosomal subunit.

It localises to the plastid. The protein localises to the chloroplast. Its function is as follows. This protein binds specifically to 23S rRNA. The globular domain of the protein is located near the polypeptide exit tunnel on the outside of the subunit, while an extended beta-hairpin is found that lines the wall of the exit tunnel in the center of the 70S ribosome. The polypeptide is Large ribosomal subunit protein uL22c (rpl22) (Panax ginseng (Korean ginseng)).